The primary structure comprises 373 residues: tRNA (guanine(26)-N(2))-dimethyltransferase (373 aa).

The Trm1 methyltransferase domain maps to 2 to 365 (KIISEGETKL…AELSDLVVLI (364 aa)). R35, R66, D86, D113, and A114 together coordinate S-adenosyl-L-methionine.

The protein belongs to the class I-like SAM-binding methyltransferase superfamily. Trm1 family.

The enzyme catalyses guanosine(26) in tRNA + 2 S-adenosyl-L-methionine = N(2)-dimethylguanosine(26) in tRNA + 2 S-adenosyl-L-homocysteine + 2 H(+). Dimethylates a single guanine residue at position 26 of a number of tRNAs using S-adenosyl-L-methionine as donor of the methyl groups. This is tRNA (guanine(26)-N(2))-dimethyltransferase from Methanococcus maripaludis (strain C5 / ATCC BAA-1333).